Reading from the N-terminus, the 123-residue chain is Small ribosomal subunit protein uS12 (123 aa).

The segment at 1 to 47 (MPTINQLVRKGRKKAEKKQSTPALKGGPQKRGVCTRVYTSTPKKPNS) is disordered. Asp-89 is subject to 3-methylthioaspartic acid.

It belongs to the universal ribosomal protein uS12 family. In terms of assembly, part of the 30S ribosomal subunit. Contacts proteins S8 and S17. May interact with IF1 in the 30S initiation complex.

In terms of biological role, with S4 and S5 plays an important role in translational accuracy. Functionally, interacts with and stabilizes bases of the 16S rRNA that are involved in tRNA selection in the A site and with the mRNA backbone. Located at the interface of the 30S and 50S subunits, it traverses the body of the 30S subunit contacting proteins on the other side and probably holding the rRNA structure together. The combined cluster of proteins S8, S12 and S17 appears to hold together the shoulder and platform of the 30S subunit. This is Small ribosomal subunit protein uS12 from Desulforapulum autotrophicum (strain ATCC 43914 / DSM 3382 / VKM B-1955 / HRM2) (Desulfobacterium autotrophicum).